A 380-amino-acid polypeptide reads, in one-letter code: Interleukin-13 receptor subunit alpha-2 (380 aa).

An N-terminal signal peptide occupies residues 1-26 (MAFVCLAIGCLYTFLISTTFGCTSSS). Residues 27–343 (DTEIKVNPPQ…EDLSKKTLLR (317 aa)) lie on the Extracellular side of the membrane. 3 Fibronectin type-III domains span residues 34 to 134 (PPQD…SPQG), 139 to 235 (KVQD…LQNI), and 240 to 333 (PPVY…CWEG). A disulfide bridge connects residues Cys65 and Cys113. An N-linked (GlcNAc...) asparagine glycan is attached at Asn115. Intrachain disulfides connect Cys145–Cys155 and Cys184–Cys197. Asn215, Asn290, and Asn299 each carry an N-linked (GlcNAc...) asparagine glycan. A disulfide bond links Cys269 and Cys316. Residues 322–326 (WSEWS) carry the WSXWS motif motif. The helical transmembrane segment at 344 to 363 (FWLPFGFILILVIFVTGLLL) threads the bilayer. The Cytoplasmic segment spans residues 364 to 380 (RKPNTYPKMIPEFFCDT).

Belongs to the type I cytokine receptor family. Type 5 subfamily. As to quaternary structure, interacts with IL4RA. Interacts with high affinity to interleukin-13 (IL13), but not to interleukin-4 (IL4). Post-translationally, cleaved by MMP8 leading to a soluble form that is also able to interact with IL13.

It is found in the cell membrane. Cell surface receptor that plays a role in the regulation of IL-13-mediated responses. Functions as a decoy receptor that inhibits IL-13- and IL-4-mediated signal transduction via the JAK-STAT pathway and thereby modulates immune responses and inflammation. Serves as a functional signaling receptor for IL-13 in an alternative pathway involving AP-1 ultimately leading to the production of TGFB1. In Homo sapiens (Human), this protein is Interleukin-13 receptor subunit alpha-2 (IL13RA2).